Here is a 437-residue protein sequence, read N- to C-terminus: Adenylosuccinate synthetase (437 aa).

Residues 13-19 (GDEGKGK) and 41-43 (GHT) each bind GTP. The Proton acceptor role is filled by Asp-14. Asp-14 and Gly-41 together coordinate Mg(2+). IMP is bound by residues 14 to 17 (DEGK), 39 to 42 (NAGH), Thr-130, Arg-144, Gln-225, Thr-240, and Arg-310. Residue His-42 is the Proton donor of the active site. 306–312 (ATTGRLR) provides a ligand contact to substrate. GTP is bound by residues Arg-312, 338 to 340 (KLD), and 421 to 423 (STG).

The protein belongs to the adenylosuccinate synthetase family. In terms of assembly, homodimer. It depends on Mg(2+) as a cofactor.

It localises to the cytoplasm. The enzyme catalyses IMP + L-aspartate + GTP = N(6)-(1,2-dicarboxyethyl)-AMP + GDP + phosphate + 2 H(+). Its pathway is purine metabolism; AMP biosynthesis via de novo pathway; AMP from IMP: step 1/2. Its function is as follows. Plays an important role in the de novo pathway of purine nucleotide biosynthesis. Catalyzes the first committed step in the biosynthesis of AMP from IMP. This is Adenylosuccinate synthetase from Psychromonas ingrahamii (strain DSM 17664 / CCUG 51855 / 37).